Reading from the N-terminus, the 296-residue chain is Complex I intermediate-associated protein 30, mitochondrial (296 aa).

The N-terminal 29 residues, 1-29, are a transit peptide targeting the mitochondrion; that stretch reads MNSLLRQGLRLGCCLPAVQQQIHTTAVHR.

The protein belongs to the CIA30 family. As to quaternary structure, associates with mitochondrial complex I assembly intermediates during its biogenesis.

Its subcellular location is the mitochondrion. Functionally, chaperone protein involved in the assembly of the mitochondrial NADH:ubiquinone oxidoreductase complex (complex I). In Drosophila melanogaster (Fruit fly), this protein is Complex I intermediate-associated protein 30, mitochondrial.